A 426-amino-acid chain; its full sequence is Gamma-glutamyl phosphate reductase (426 aa).

This sequence belongs to the gamma-glutamyl phosphate reductase family.

Its subcellular location is the cytoplasm. It carries out the reaction L-glutamate 5-semialdehyde + phosphate + NADP(+) = L-glutamyl 5-phosphate + NADPH + H(+). It functions in the pathway amino-acid biosynthesis; L-proline biosynthesis; L-glutamate 5-semialdehyde from L-glutamate: step 2/2. Functionally, catalyzes the NADPH-dependent reduction of L-glutamate 5-phosphate into L-glutamate 5-semialdehyde and phosphate. The product spontaneously undergoes cyclization to form 1-pyrroline-5-carboxylate. The sequence is that of Gamma-glutamyl phosphate reductase from Delftia acidovorans (strain DSM 14801 / SPH-1).